We begin with the raw amino-acid sequence, 328 residues long: Naphthalene 1,2-dioxygenase system ferredoxin--NAD(P)(+), reductase component (328 aa).

A 2Fe-2S ferredoxin-type domain is found at Met-1–Asp-89. 4 residues coordinate [2Fe-2S] cluster: Cys-35, Cys-40, Cys-43, and Cys-73. Residues Ala-96–Arg-193 form the FAD-binding FR-type domain.

Belongs to the bacterial ring-hydroxylating dioxygenase ferredoxin reductase component family. In terms of assembly, the naphthalene dioxygenase (NDO) multicomponent enzyme system is composed of an electron transfer component and a dioxygenase component (iron sulfur protein (ISP)). The electron transfer component is composed of a ferredoxin reductase (NdoR) and a ferredoxin (NdoA), and the dioxygenase component is formed of a heterohexamer (trimer of heterodimers) of three large alpha subunits (NdoB) and three small beta subunits (NdoC). It depends on [2Fe-2S] cluster as a cofactor. The cofactor is FAD.

The enzyme catalyses 2 reduced [2Fe-2S]-[ferredoxin] + NAD(+) + H(+) = 2 oxidized [2Fe-2S]-[ferredoxin] + NADH. It carries out the reaction 2 reduced [2Fe-2S]-[ferredoxin] + NADP(+) + H(+) = 2 oxidized [2Fe-2S]-[ferredoxin] + NADPH. It functions in the pathway aromatic compound metabolism; naphthalene degradation. With respect to regulation, strongly inhibited by p-chloromercuribenzoate. Also inhibited by N-ethylmaleimide and o-phenanthroline. Functionally, component of the naphthalene dioxygenase (NDO) multicomponent enzyme system which catalyzes the incorporation of both atoms of molecular oxygen into naphthalene to form cis-(1R,2S)-dihydroxy-1,2-dihydronaphthalene. Ferredoxin reductase catalyzes the transfer of electrons from NADH to ferredoxin (NdoA). NADPH is also effective but yields only 39% of the activity obtained with NADH. Also able to catalyze the cis-dihydroxylation of biphenyl and phenanthrene. This chain is Naphthalene 1,2-dioxygenase system ferredoxin--NAD(P)(+), reductase component (ndoR), found in Pseudomonas putida (Arthrobacter siderocapsulatus).